The sequence spans 27 residues: Defensin-like protein 2 (27 aa).

Pyrrolidone carboxylic acid is present on Q1.

This sequence belongs to the DEFL family. As to quaternary structure, forms oligomers in its native state.

Its function is as follows. Possesses some antifungal activity sensitive to inorganic cations and antibacterial activity against B.megaterium. This chain is Defensin-like protein 2, found in Brassica campestris (Field mustard).